The following is a 276-amino-acid chain: NH(3)-dependent NAD(+) synthetase (276 aa).

Residue 43 to 50 coordinates ATP; sequence GISGGVDS. Position 49 (Asp-49) interacts with Mg(2+). Deamido-NAD(+) is bound at residue Arg-146. Thr-166 contacts ATP. Position 171 (Glu-171) interacts with Mg(2+). Positions 179 and 186 each coordinate deamido-NAD(+). ATP is bound by residues Lys-195 and Thr-217. 266-267 provides a ligand contact to deamido-NAD(+); it reads HK.

The protein belongs to the NAD synthetase family. Homodimer.

It catalyses the reaction deamido-NAD(+) + NH4(+) + ATP = AMP + diphosphate + NAD(+) + H(+). The protein operates within cofactor biosynthesis; NAD(+) biosynthesis; NAD(+) from deamido-NAD(+) (ammonia route): step 1/1. Its function is as follows. Catalyzes the ATP-dependent amidation of deamido-NAD to form NAD. Uses ammonia as a nitrogen source. This is NH(3)-dependent NAD(+) synthetase from Shewanella halifaxensis (strain HAW-EB4).